The following is a 1270-amino-acid chain: Myosin-1 (1270 aa).

The tract at residues 1-40 (MGHSRRPAGGEKKSRGFGRSKAAADVGDGRQAGKPQVKKA) is disordered. The 680-residue stretch at 50–729 (IGVSDLTLLS…TLFALETMRD (680 aa)) folds into the Myosin motor domain. An ATP-binding site is contributed by 143–150 (GESGAGKT). S371 carries the phosphoserine modification. The actin-binding stretch occupies residues 418-500 (SIGILDIYGF…PGVFAALNDA (83 aa)). IQ domains are found at residues 733–753 (HNMA…RIEC) and 754–779 (AIRI…QGHQ). The TH1 domain occupies 787 to 980 (RRRMSLLGSR…TIHTSAGEPP (194 aa)). 2 disordered regions span residues 960-1102 (GASN…VLYD) and 1144-1270 (PEAY…DDEW). Polar residues predominate over residues 963–974 (NVDSYKSSTIHT). Pro residues predominate over residues 1023–1058 (ARQPMPQPTPQPAAVQPPPAPRPAVSPAAQPRPVPQ). The span at 1059–1078 (PVAAVAAAQHTRNASSSSTR) shows a compositional bias: low complexity. Positions 1079–1088 (APPPPPPATP) are enriched in pro residues. One can recognise an SH3 domain in the interval 1092–1153 (QRKPMAKVLY…PEAYLEEQVA (62 aa)). Pro residues predominate over residues 1157–1167 (KPAPPPPPPAA). 2 stretches are compositionally biased toward low complexity: residues 1168–1186 (PRAS…VAAK) and 1238–1252 (NSAS…LAEA).

Belongs to the TRAFAC class myosin-kinesin ATPase superfamily. Myosin family. Phosphorylation of the TEDS site (Ser-371) is required for the polarization of the actin cytoskeleton. Phosphorylation probably activates the myosin-I ATPase activity.

It is found in the cytoplasm. The protein localises to the cytoskeleton. Its subcellular location is the actin patch. Its function is as follows. Type-I myosin implicated in the organization of the actin cytoskeleton. Required for proper actin cytoskeleton polarization. At the cell cortex, assembles in patch-like structures together with proteins from the actin-polymerizing machinery and promotes actin assembly. Functions as actin nucleation-promoting factor (NPF) for the Arp2/3 complex. Plays an important role in polarized growth, spore germination, hyphal morphogenesis, and septal wall formation. The chain is Myosin-1 (myoA) from Aspergillus niger (strain ATCC MYA-4892 / CBS 513.88 / FGSC A1513).